Here is a 320-residue protein sequence, read N- to C-terminus: Tetraspanin-32 (320 aa).

4 helical membrane-spanning segments follow: residues 14–34 (MLVTCFFILLLGLSVATMVTL), 60–80 (WAFSAGLSLVGLLTLGAVLSA), 90–110 (LMAGGFLCFSLAFCAQVQVVF), and 203–223 (SIGLALTVSALLFSSFLWFAI).

This sequence belongs to the tetraspanin (TM4SF) family. In terms of tissue distribution, expressed ubiquitously at low levels. High levels of expression are confined to hematopoietic tissues including peripheral blood leukocytes, thymus and spleen.

Its subcellular location is the membrane. The polypeptide is Tetraspanin-32 (TSPAN32) (Homo sapiens (Human)).